We begin with the raw amino-acid sequence, 175 residues long: Peptide deformylase (175 aa).

Residues Cys96 and His138 each contribute to the Fe cation site. Glu139 is an active-site residue. Residue His142 coordinates Fe cation.

It belongs to the polypeptide deformylase family. Fe(2+) is required as a cofactor.

The catalysed reaction is N-terminal N-formyl-L-methionyl-[peptide] + H2O = N-terminal L-methionyl-[peptide] + formate. Functionally, removes the formyl group from the N-terminal Met of newly synthesized proteins. Requires at least a dipeptide for an efficient rate of reaction. N-terminal L-methionine is a prerequisite for activity but the enzyme has broad specificity at other positions. The polypeptide is Peptide deformylase (Helicobacter pylori (strain Shi470)).